The following is a 375-amino-acid chain: POU domain, class 3, transcription factor 1-A (375 aa).

3 disordered regions span residues 1 to 29, 67 to 138, and 151 to 200; these read MAAT…RMHQ, PASD…HQPL, and MLGP…PSSD. 3 stretches are compositionally biased toward polar residues: residues 107–117, 129–138, and 151–160; these read VHQQSPSSHAW, SPSSNSHQPL, and MLGPQASSLH. A compositionally biased stretch (basic and acidic residues) spans 162–177; the sequence is SMRDPLHDDPGVHDTQ. The POU-specific domain maps to 194–268; sequence EDAPSSDDLE…LLNKWLEETD (75 aa). The homeobox DNA-binding region spans 286–345; that stretch reads KRKKRTSIEVGVKGALENHFLKCPKPSAHEITSLADSLQLEKEVVRVWFCNRRQKEKRMT.

The protein belongs to the POU transcription factor family. Class-3 subfamily. In terms of tissue distribution, in embryos at the neural fold stage, localized primarily in the anterior neural plate, and localized mostly in the anterior region of the nerve cord of neurula stage embryos. In tailbud stages, expressed predominantly in the eye and brain, with weak expression along the length of the nerve cord. In adults, expressed in skin and brain.

The protein resides in the nucleus. Functionally, acts as a transcription factor. May play a role in neuronal differentiation. The chain is POU domain, class 3, transcription factor 1-A (pou3f1-a) from Xenopus laevis (African clawed frog).